Reading from the N-terminus, the 358-residue chain is MSVCYRPPGNETLLSWKGSRATGTAFLLLAALLGLPGNGFVVWSLAGWRPTAGRPLAATLVLHLALADGAVLLLTPLFVAFLSRQAWPLGQVGCKAVYYVCALSMYASVLLTGLLSLQRCLAVTRPFLAPRLRSPALARRLLLGVWLAALVLAVPAAVYRHLWGDRVCQLCHPSAVHAAAHLSLETLTAFVLPFGTVLGCYGVTLARLRGARWGSGRQGTRVGRLVSAIVLAFGLLWAPYHAVNLLQAVAALAPPEGPLARLGGAGQAARAGTTALAFFSSSVNPVLYVFTAGDLLPRAGPRFLTRLFEGSGEARVGSRSREGTMELRTTPRLKVVGQGRGYGDPGGGGRMEKDSQEW.

Residues 1-24 lie on the Extracellular side of the membrane; sequence MSVCYRPPGNETLLSWKGSRATGT. N10 carries N-linked (GlcNAc...) asparagine glycosylation. Residues 25–45 traverse the membrane as a helical segment; it reads AFLLLAALLGLPGNGFVVWSL. Residues 46–60 are Cytoplasmic-facing; it reads AGWRPTAGRPLAATL. A helical transmembrane segment spans residues 61 to 81; it reads VLHLALADGAVLLLTPLFVAF. The Extracellular portion of the chain corresponds to 82–96; the sequence is LSRQAWPLGQVGCKA. A helical membrane pass occupies residues 97 to 117; that stretch reads VYYVCALSMYASVLLTGLLSL. Residues 118-140 are Cytoplasmic-facing; the sequence is QRCLAVTRPFLAPRLRSPALARR. A helical membrane pass occupies residues 141 to 161; sequence LLLGVWLAALVLAVPAAVYRH. Residues 162–185 lie on the Extracellular side of the membrane; the sequence is LWGDRVCQLCHPSAVHAAAHLSLE. Residues 186–206 form a helical membrane-spanning segment; it reads TLTAFVLPFGTVLGCYGVTLA. The Cytoplasmic segment spans residues 207–225; that stretch reads RLRGARWGSGRQGTRVGRL. Residues 226–246 traverse the membrane as a helical segment; that stretch reads VSAIVLAFGLLWAPYHAVNLL. The Extracellular portion of the chain corresponds to 247–275; it reads QAVAALAPPEGPLARLGGAGQAARAGTTA. A helical membrane pass occupies residues 276–296; the sequence is LAFFSSSVNPVLYVFTAGDLL. Over 297-358 the chain is Cytoplasmic; sequence PRAGPRFLTR…GRMEKDSQEW (62 aa). Positions 315–358 are disordered; it reads RVGSRSREGTMELRTTPRLKVVGQGRGYGDPGGGGRMEKDSQEW. Over residues 338–349 the composition is skewed to gly residues; the sequence is QGRGYGDPGGGG.

It belongs to the G-protein coupled receptor 1 family.

It is found in the cell membrane. Its function is as follows. Low-affinity receptor for leukotrienes including leukotriene B4. Mediates chemotaxis of granulocytes and macrophages. The response is mediated via G-proteins that activate a phosphatidylinositol-calcium second messenger system. The protein is Leukotriene B4 receptor 2 (Ltb4r2) of Rattus norvegicus (Rat).